Reading from the N-terminus, the 371-residue chain is Protein NDRG2 (371 aa).

The tract at residues 1–22 (MAELQEVQITEEKPLLPGQTPE) is disordered. Ala2 bears the N-acetylalanine mark. Thr20 is subject to Phosphothreonine. A phosphoserine mark is found at Ser326 and Ser328. Thr330 carries the post-translational modification Phosphothreonine; by SGK1. Phosphoserine; by PKC/PRKCQ or SGK1 is present on Ser332. Thr334 carries the post-translational modification Phosphothreonine. Residues 334–371 (TSAASIDGSRSRSRTLSQSSESGTLPSGPPGHTMEVSC) are disordered. Ser335, Ser338, and Ser344 each carry phosphoserine. Residue Thr348 is modified to Phosphothreonine; by PKB/AKT1 or SGK1. Phosphoserine is present on residues Ser350, Ser352, Ser353, and Ser355. Thr357 carries the phosphothreonine modification. Ser370 carries the phosphoserine modification.

The protein belongs to the NDRG family. Interacts with CTNNB1. As to expression, expressed at highest levels in brain, heart and liver, and at lower levels in kidney, colon, skeletal muscle, adrenal gland, ovary and uterus (at protein level).

It is found in the cytoplasm. The protein resides in the perinuclear region. It localises to the cell projection. Its subcellular location is the growth cone. Functionally, contributes to the regulation of the Wnt signaling pathway. Down-regulates CTNNB1-mediated transcriptional activation of target genes, such as CCND1, and may thereby act as tumor suppressor. May be involved in dendritic cell and neuron differentiation. The chain is Protein NDRG2 (Ndrg2) from Mus musculus (Mouse).